Consider the following 542-residue polypeptide: Prolyl 3-hydroxylase OGFOD1 (542 aa).

One can recognise a Fe2OG dioxygenase domain in the interval 134 to 239; that stretch reads DLESTIDMSC…RLSISGWFHG (106 aa). The Fe cation site is built by His155 and Asp157. Position 169 (Tyr169) interacts with 2-oxoglutarate. His218 is a Fe cation binding site. Arg230 lines the 2-oxoglutarate pocket. Positions 373-435 are disordered; it reads EDEMNDKKEA…TKKESSVPTC (63 aa). A compositionally biased stretch (polar residues) spans 400–416; sequence ENNQTAISNNSQQSNEQ.

Belongs to the TPA1 family. Monomer. Fe(2+) is required as a cofactor. It depends on L-ascorbate as a cofactor.

The protein resides in the cytoplasm. It is found in the nucleus. It carries out the reaction [ribosomal protein uS12]-L-proline + 2-oxoglutarate + O2 = [ribosomal protein uS12]-(3S)-3-hydroxy-L-proline + succinate + CO2. Its function is as follows. Prolyl 3-hydroxylase that catalyzes 3-hydroxylation of 'Pro-62' of small ribosomal subunit uS12 (RPS23), thereby regulating protein translation termination efficiency. Involved in stress granule formation. The sequence is that of Prolyl 3-hydroxylase OGFOD1 (OGFOD1) from Pongo abelii (Sumatran orangutan).